We begin with the raw amino-acid sequence, 226 residues long: Sugar transporter SWEET1 (226 aa).

Transmembrane regions (helical) follow at residues 8-28, 42-62, 67-87, 94-114, 127-147, 161-181, and 185-205; these read LLST…AMIC, GVPF…GVLT, IVLV…IYYV, AFVR…VVYT, ITGI…LATL, LPLI…GILI, and FIQI…SLFV. One can recognise a MtN3/slv 1 domain in the interval 8–92; that stretch reads LLSTTAVIST…LIYYVFTVNK (85 aa). A MtN3/slv 2 domain is found at 129–210; sequence GIFCCIVTVC…LSLFVVYPPR (82 aa).

The protein belongs to the SWEET sugar transporter family.

The protein resides in the golgi apparatus membrane. The protein localises to the cell membrane. Functionally, mediates both low-affinity uptake and efflux of sugar across the membrane. The chain is Sugar transporter SWEET1 (slv) from Drosophila pseudoobscura pseudoobscura (Fruit fly).